Reading from the N-terminus, the 707-residue chain is Molybdenum cofactor sulfurase (707 aa).

Residue Lys-206 is modified to N6-(pyridoxal phosphate)lysine. Residue Cys-365 is part of the active site. The 148-residue stretch at 558–705 (QWLENALDMT…VEAGSAVRFF (148 aa)) folds into the MOSC domain.

Belongs to the class-V pyridoxal-phosphate-dependent aminotransferase family. MOCOS subfamily. It depends on pyridoxal 5'-phosphate as a cofactor.

The enzyme catalyses Mo-molybdopterin + L-cysteine + AH2 = thio-Mo-molybdopterin + L-alanine + A + H2O. Its pathway is cofactor biosynthesis; molybdopterin biosynthesis. Its function is as follows. Sulfurates the molybdenum cofactor. Sulfation of molybdenum is essential for xanthine dehydrogenase (XDH) and aldehyde oxidase (ADO) enzymes in which molybdenum cofactor is liganded by 1 oxygen and 1 sulfur atom in active form. The polypeptide is Molybdenum cofactor sulfurase (mocs-1) (Caenorhabditis briggsae).